The primary structure comprises 203 residues: Undecaprenyl phosphate transporter A (203 aa).

Transmembrane regions (helical) follow at residues 16–36 (AIFILILLENVLPIVPSEIIL), 48–68 (LSILTLFIIATIASFIGLLIL), 108–128 (YGVWAVFICRFIPVLRVLITI), 137–157 (VVTFTVISLIGTTIWNFGLIL), and 173–193 (LHTYSRIMYVVIIIAVIYFAI).

It belongs to the DedA family.

Its subcellular location is the cell membrane. Its function is as follows. Flippase that catalyzes the transport of undecaprenyl phosphate (UndP) across the cytoplasmic membrane, from the external side to the cytoplasmic side. Is involved in UndP recycling during peptidoglycan synthesis. The sequence is that of Undecaprenyl phosphate transporter A from Staphylococcus aureus (strain NCTC 8325 / PS 47).